Consider the following 295-residue polypeptide: Pyridoxal 5'-phosphate synthase subunit PdxS (295 aa).

D25 lines the D-ribose 5-phosphate pocket. K82 (schiff-base intermediate with D-ribose 5-phosphate) is an active-site residue. G154 provides a ligand contact to D-ribose 5-phosphate. Residue R166 participates in D-glyceraldehyde 3-phosphate binding. D-ribose 5-phosphate is bound by residues G215 and G236–S237.

This sequence belongs to the PdxS/SNZ family. In the presence of PdxT, forms a dodecamer of heterodimers.

It carries out the reaction aldehydo-D-ribose 5-phosphate + D-glyceraldehyde 3-phosphate + L-glutamine = pyridoxal 5'-phosphate + L-glutamate + phosphate + 3 H2O + H(+). Its pathway is cofactor biosynthesis; pyridoxal 5'-phosphate biosynthesis. Its function is as follows. Catalyzes the formation of pyridoxal 5'-phosphate from ribose 5-phosphate (RBP), glyceraldehyde 3-phosphate (G3P) and ammonia. The ammonia is provided by the PdxT subunit. Can also use ribulose 5-phosphate and dihydroxyacetone phosphate as substrates, resulting from enzyme-catalyzed isomerization of RBP and G3P, respectively. The protein is Pyridoxal 5'-phosphate synthase subunit PdxS of Staphylococcus epidermidis (strain ATCC 35984 / DSM 28319 / BCRC 17069 / CCUG 31568 / BM 3577 / RP62A).